A 614-amino-acid chain; its full sequence is Polyamine transporter 2 (614 aa).

The interval 1-40 (MSDQESVVSFNSQNTSMVDVEGQQPQQYVPSKTNSRANQL) is disordered. The Cytoplasmic segment spans residues 1 to 173 (MSDQESVVSF…WPSWVRWSYT (173 aa)). Phosphoserine is present on serine 50. Residues 99 to 122 (RTASALSRTRTKQLNRTATNSSST) show a composition bias toward polar residues. Residues 99 to 144 (RTASALSRTRTKQLNRTATNSSSTGKEEMEEEETEEREDQSGENEL) form a disordered region. Residues 126–144 (EMEEEETEEREDQSGENEL) show a composition bias toward acidic residues. A helical transmembrane segment spans residues 174 to 194 (VLLSILVICVAYGSACISGGL). At 195 to 206 (GTVEKKYHVGME) the chain is on the extracellular side. Residues 207-227 (AAILSCSLMVIGFSLGPLIWS) form a helical membrane-spanning segment. Residues 228-236 (PVSDLYGRR) are Cytoplasmic-facing. The chain crosses the membrane as a helical span at residues 237–257 (VAYFVSMGLYVIFNIPCALAP). Over 258 to 266 (NLGCLLACR) the chain is Extracellular. A helical transmembrane segment spans residues 267–287 (FLCGVWSSSGLCLVGGSIADM). At 288–297 (FPSETRGKAI) the chain is on the cytoplasmic side. The chain crosses the membrane as a helical span at residues 298–318 (AFFAFAPYVGPVVGPLVNGFI). At 319–326 (SVSTGRMD) the chain is on the extracellular side. The helical transmembrane segment at 327-347 (LIFWVNMAFAGVMWIISSAIP) threads the bilayer. Residues 348 to 407 (ETYAPVILKRKAARLRKETGNPKIMTEQEAQGVSMSEMMRACLLRPLYFAVTEPVLVATC) are Cytoplasmic-facing. The chain crosses the membrane as a helical span at residues 408 to 428 (FYVCLIYSLLYAFFFAFPVIF). At 429–437 (GELYGYKDN) the chain is on the extracellular side. The chain crosses the membrane as a helical span at residues 438 to 458 (LVGLMFIPIVIGALWALATTF). The Cytoplasmic segment spans residues 459 to 478 (YCENKYLQIVKQRKPTPEDR). Residues 479–499 (LLGAKIGAPFAAIALWILGAT) traverse the membrane as a helical segment. Residues 500 to 503 (AYKH) are Extracellular-facing. The helical transmembrane segment at 504-524 (IIWVGPASAGLAFGFGMVLIY) threads the bilayer. At 525 to 541 (YSLNNYIIDCYVQYASS) the chain is on the cytoplasmic side. The chain crosses the membrane as a helical span at residues 542 to 562 (ALATKVFLRSAGGAAFPLFTI). Residues 563 to 574 (QMYHKLNLHWGS) are Extracellular-facing. The chain crosses the membrane as a helical span at residues 575 to 595 (WLLAFISTAMIALPFAFSYWG). Residues 596 to 614 (KGLRHKLSKKDYSIDSVEM) are Cytoplasmic-facing.

Belongs to the major facilitator superfamily. DHA1 family. Polyamines/proton antiporter (TC 2.A.1.2.16) subfamily.

The protein localises to the cell membrane. Its function is as follows. Cell membrane polyamine/proton antiporter, involved in the detoxification of excess polyamines in the cytoplasm. Recognizes spermine, but not spermidine. This chain is Polyamine transporter 2 (TPO2), found in Saccharomyces cerevisiae (strain ATCC 204508 / S288c) (Baker's yeast).